The primary structure comprises 155 residues: Small ribosomal subunit protein bS6 (155 aa).

The interval 94-155 (VKQEGPLPTP…TPELEEQVKS (62 aa)) is disordered. Positions 103 to 112 (PRSSNKSSNQ) are enriched in polar residues. The segment covering 113–141 (AEKKENENIDSANKSEPKADETDNKKKIT) has biased composition (basic and acidic residues).

It belongs to the bacterial ribosomal protein bS6 family.

In terms of biological role, binds together with bS18 to 16S ribosomal RNA. This Prochlorococcus marinus (strain MIT 9515) protein is Small ribosomal subunit protein bS6.